The chain runs to 1305 residues: Rho GTPase-activating protein 33 (1305 aa).

A disordered region spans residues 1-64; the sequence is MLQAQKQSDP…KPGKRLSAPR (64 aa). Serine 32 bears the Phosphoserine mark. Positions 83–192 constitute a PX; atypical domain; that stretch reads FGHIQLLLSP…CGPVLTWMEL (110 aa). The SH3 domain occupies 210 to 272; the sequence is PAVAAAHVVK…PSECVELFTE (63 aa). The Rho-GAP domain maps to 339 to 534; it reads CDLGEHLSNS…FLLTHVEVLF (196 aa). Disordered stretches follow at residues 575–818, 864–1054, and 1115–1305; these read RTQG…LDIS, LSDT…SFFS, and SYSG…RSYC. Low complexity predominate over residues 582–595; sequence TPTEPTTPKTPASP. Serine 594 is subject to Phosphoserine. Basic and acidic residues predominate over residues 596-608; that stretch reads VERRKRERAEKQR. Positions 646–669 are enriched in polar residues; that stretch reads SGSRPDTVTLRSAKSEESLSSQAS. Position 660 is a phosphoserine (serine 660). Residues 694-733 are compositionally biased toward low complexity; it reads APAGSCESLSSSSSSSSSSSSSSSSESSAGGLGPLSGSPS. A Phosphoserine modification is found at serine 749. Over residues 774–786 the composition is skewed to pro residues; that stretch reads PGDPAPPASPAPP. Low complexity predominate over residues 787 to 798; that stretch reads ASASAFPPRATP. A compositionally biased stretch (polar residues) spans 864-873; it reads LSDTCQQEIS. Pro residues predominate over residues 895–915; the sequence is LLPPPLPLLRPGGAPPPPPKN. Low complexity predominate over residues 916-940; that stretch reads PARLMALALAERAQQVAEQQSQQEQ. Composition is skewed to polar residues over residues 992-1020, 1039-1054, and 1115-1125; these read RQQS…SQVS, SPCS…SFFS, and SYSGPSRSWSP. At tyrosine 1188 the chain carries Phosphotyrosine. Over residues 1194–1208 the composition is skewed to low complexity; it reads GPRGPSPASSSSSSP. Position 1263 is an omega-N-methylarginine (arginine 1263). The segment covering 1292-1305 has biased composition (polar residues); it reads SWSLHSEGQTRSYC.

The protein belongs to the PX domain-containing GAP family. As to quaternary structure, specifically interacts with CDC42 and RHOQ/TC10 through its Rho-GAP domain. Interacts with NEK6. In terms of tissue distribution, highly expressed in brain and testis. Also expressed in white adipose tissue (WAT) and muscle at a low level.

It is found in the cell membrane. Functionally, may be involved in several stages of intracellular trafficking. Could play an important role in the regulation of glucose transport by insulin. May act as a downstream effector of RHOQ/TC10 in the regulation of insulin-stimulated glucose transport. The polypeptide is Rho GTPase-activating protein 33 (Arhgap33) (Mus musculus (Mouse)).